The sequence spans 282 residues: Large ribosomal subunit protein uL2 (282 aa).

Residues 215-282 are disordered; the sequence is RHKGIRPTVR…IIRSRKETKK (68 aa). Basic residues predominate over residues 263–282; it reads RNPKKPSTKLIIRSRKETKK.

The protein belongs to the universal ribosomal protein uL2 family. Part of the 50S ribosomal subunit. Forms a bridge to the 30S subunit in the 70S ribosome.

In terms of biological role, one of the primary rRNA binding proteins. Required for association of the 30S and 50S subunits to form the 70S ribosome, for tRNA binding and peptide bond formation. It has been suggested to have peptidyltransferase activity; this is somewhat controversial. Makes several contacts with the 16S rRNA in the 70S ribosome. The protein is Large ribosomal subunit protein uL2 of Mesomycoplasma hyopneumoniae (strain 7448) (Mycoplasma hyopneumoniae).